We begin with the raw amino-acid sequence, 164 residues long: Cyclic pyranopterin monophosphate synthase (164 aa).

Residues 73–75 (LCH) and 111–112 (ME) each bind substrate. The active site involves Asp126.

It belongs to the MoaC family. Homohexamer; trimer of dimers.

It carries out the reaction (8S)-3',8-cyclo-7,8-dihydroguanosine 5'-triphosphate = cyclic pyranopterin phosphate + diphosphate. Its pathway is cofactor biosynthesis; molybdopterin biosynthesis. Catalyzes the conversion of (8S)-3',8-cyclo-7,8-dihydroguanosine 5'-triphosphate to cyclic pyranopterin monophosphate (cPMP). This Herpetosiphon aurantiacus (strain ATCC 23779 / DSM 785 / 114-95) protein is Cyclic pyranopterin monophosphate synthase.